Reading from the N-terminus, the 412-residue chain is Gamma-glutamyl phosphate reductase (412 aa).

The protein belongs to the gamma-glutamyl phosphate reductase family.

Its subcellular location is the cytoplasm. The enzyme catalyses L-glutamate 5-semialdehyde + phosphate + NADP(+) = L-glutamyl 5-phosphate + NADPH + H(+). The protein operates within amino-acid biosynthesis; L-proline biosynthesis; L-glutamate 5-semialdehyde from L-glutamate: step 2/2. Its function is as follows. Catalyzes the NADPH-dependent reduction of L-glutamate 5-phosphate into L-glutamate 5-semialdehyde and phosphate. The product spontaneously undergoes cyclization to form 1-pyrroline-5-carboxylate. This is Gamma-glutamyl phosphate reductase from Actinobacillus pleuropneumoniae serotype 3 (strain JL03).